We begin with the raw amino-acid sequence, 415 residues long: Thylakoid ADP,ATP carrier protein, chloroplastic (415 aa).

The transit peptide at M1 to R61 directs the protein to the chloroplast. Helical transmembrane passes span I106 to G126, L182 to R207, L219 to L239, G273 to V293, and L309 to I329. 3 Solcar repeats span residues P113 to L205, L213 to S296, and S307 to L387. R187 contacts ADP. Position 330 (R330) interacts with ADP. A helical transmembrane segment spans residues G362–I388.

It belongs to the mitochondrial carrier (TC 2.A.29) family. Highly expressed in developing photosynthetic organs such as leaves, flower buds and green siliques. Also detected in roots, flowers, mature leaves and stems.

The protein localises to the plastid. It is found in the chloroplast thylakoid membrane. The protein resides in the chloroplast envelope. With respect to regulation, KM and Vmax values toward ATP only are increased by m-chlorocarbonyl cyanide phenylhydrazone (CCCP). The corresponding values for ADP are not affected. Specifically transports adenine nucleotides. Involved in the uptake of ATP into thylakoids in exchange for lumenal ADP. The chain is Thylakoid ADP,ATP carrier protein, chloroplastic (TAAC) from Arabidopsis thaliana (Mouse-ear cress).